A 480-amino-acid polypeptide reads, in one-letter code: Aspartyl/glutamyl-tRNA(Asn/Gln) amidotransferase subunit B (480 aa).

This sequence belongs to the GatB/GatE family. GatB subfamily. As to quaternary structure, heterotrimer of A, B and C subunits.

The catalysed reaction is L-glutamyl-tRNA(Gln) + L-glutamine + ATP + H2O = L-glutaminyl-tRNA(Gln) + L-glutamate + ADP + phosphate + H(+). The enzyme catalyses L-aspartyl-tRNA(Asn) + L-glutamine + ATP + H2O = L-asparaginyl-tRNA(Asn) + L-glutamate + ADP + phosphate + 2 H(+). Allows the formation of correctly charged Asn-tRNA(Asn) or Gln-tRNA(Gln) through the transamidation of misacylated Asp-tRNA(Asn) or Glu-tRNA(Gln) in organisms which lack either or both of asparaginyl-tRNA or glutaminyl-tRNA synthetases. The reaction takes place in the presence of glutamine and ATP through an activated phospho-Asp-tRNA(Asn) or phospho-Glu-tRNA(Gln). This chain is Aspartyl/glutamyl-tRNA(Asn/Gln) amidotransferase subunit B, found in Streptococcus pneumoniae serotype 4 (strain ATCC BAA-334 / TIGR4).